Reading from the N-terminus, the 211-residue chain is Nucleoside triphosphate pyrophosphatase (211 aa).

The active-site Proton acceptor is the Asp-78.

The protein belongs to the Maf family. A divalent metal cation serves as cofactor.

Its subcellular location is the cytoplasm. The catalysed reaction is a ribonucleoside 5'-triphosphate + H2O = a ribonucleoside 5'-phosphate + diphosphate + H(+). The enzyme catalyses a 2'-deoxyribonucleoside 5'-triphosphate + H2O = a 2'-deoxyribonucleoside 5'-phosphate + diphosphate + H(+). Its function is as follows. Nucleoside triphosphate pyrophosphatase. May have a dual role in cell division arrest and in preventing the incorporation of modified nucleotides into cellular nucleic acids. This Mycolicibacterium smegmatis (strain ATCC 700084 / mc(2)155) (Mycobacterium smegmatis) protein is Nucleoside triphosphate pyrophosphatase.